Consider the following 266-residue polypeptide: UPF0328 protein ECU03_0130 (266 aa).

This sequence belongs to the UPF0328 family.

This Encephalitozoon cuniculi (strain GB-M1) (Microsporidian parasite) protein is UPF0328 protein ECU03_0130.